A 325-amino-acid chain; its full sequence is Delta(1)-pyrroline-2-carboxylate reductase (325 aa).

It belongs to the ornithine cyclodeaminase/mu-crystallin family.

It catalyses the reaction L-proline + NAD(+) = 1-pyrroline-2-carboxylate + NADH + H(+). It carries out the reaction L-proline + NADP(+) = 1-pyrroline-2-carboxylate + NADPH + H(+). Catalyzes the reduction of Delta(1)-pyrroline-2-carboxylate (Pyr2C) to L-proline, using preferentially NADPH over NADH as the electron donor. Is likely involved in a degradation pathway that converts trans-3-hydroxy-L-proline (t3LHyp) to L-proline. The protein is Delta(1)-pyrroline-2-carboxylate reductase of Bacillus thuringiensis subsp. konkukian (strain 97-27).